Consider the following 35-residue polypeptide: Photosystem II reaction center protein T (35 aa).

Residues alanine 3–phenylalanine 23 form a helical membrane-spanning segment.

Belongs to the PsbT family. In terms of assembly, PSII is composed of 1 copy each of membrane proteins PsbA, PsbB, PsbC, PsbD, PsbE, PsbF, PsbH, PsbI, PsbJ, PsbK, PsbL, PsbM, PsbT, PsbY, PsbZ, Psb30/Ycf12, at least 3 peripheral proteins of the oxygen-evolving complex and a large number of cofactors. It forms dimeric complexes.

It localises to the plastid. It is found in the chloroplast thylakoid membrane. In terms of biological role, found at the monomer-monomer interface of the photosystem II (PS II) dimer, plays a role in assembly and dimerization of PSII. PSII is a light-driven water plastoquinone oxidoreductase, using light energy to abstract electrons from H(2)O, generating a proton gradient subsequently used for ATP formation. This Saururus cernuus (Lizard's tail) protein is Photosystem II reaction center protein T.